We begin with the raw amino-acid sequence, 135 residues long: Ribosome-binding factor A (135 aa).

Belongs to the RbfA family. As to quaternary structure, monomer. Binds 30S ribosomal subunits, but not 50S ribosomal subunits or 70S ribosomes.

The protein localises to the cytoplasm. Functionally, one of several proteins that assist in the late maturation steps of the functional core of the 30S ribosomal subunit. Associates with free 30S ribosomal subunits (but not with 30S subunits that are part of 70S ribosomes or polysomes). Required for efficient processing of 16S rRNA. May interact with the 5'-terminal helix region of 16S rRNA. The chain is Ribosome-binding factor A from Bartonella henselae (strain ATCC 49882 / DSM 28221 / CCUG 30454 / Houston 1) (Rochalimaea henselae).